We begin with the raw amino-acid sequence, 921 residues long: 2-oxoadipate dehydrogenase complex component E1 (921 aa).

2 positions are modified to N6-succinyllysine: Lys184 and Lys189. Positions Gly300–Ser319 are disordered. Residues Lys801 and Lys819 each carry the N6-succinyllysine modification.

It belongs to the alpha-ketoglutarate dehydrogenase family. The 2-oxoadipate dehydrogenase complex is composed of OADH (2-oxoadipate dehydrogenase; E1a), DLST (dihydrolipoamide succinyltransferase; E2) and DLD (dihydrolipoamide dehydrogenase; E3). E1a functional unit is a dimer. Requires thiamine diphosphate as cofactor.

It localises to the mitochondrion. It catalyses the reaction N(6)-[(R)-lipoyl]-L-lysyl-[protein] + 2-oxoadipate + H(+) = N(6)-[(R)-S(8)-glutaryldihydrolipoyl]-L-lysyl-[protein] + CO2. It participates in amino-acid degradation. 2-oxoadipate dehydrogenase (E1a) component of the 2-oxoadipate dehydrogenase complex (OADHC). Participates in the first step, rate limiting for the overall conversion of 2-oxoadipate (alpha-ketoadipate) to glutaryl-CoA and CO(2) catalyzed by the whole OADHC. Catalyzes the irreversible decarboxylation of 2-oxoadipate via the thiamine diphosphate (ThDP) cofactor and subsequent transfer of the decarboxylated acyl intermediate on an oxidized dihydrolipoyl group that is covalently amidated to the E2 enzyme (dihydrolipoyllysine-residue succinyltransferase or DLST). Can catalyze the decarboxylation of 2-oxoglutarate in vitro, but at a much lower rate than 2-oxoadipate. Responsible for the last step of L-lysine, L-hydroxylysine and L-tryptophan catabolism with the common product being 2-oxoadipate. The protein is 2-oxoadipate dehydrogenase complex component E1 (Dhtkd1) of Mus musculus (Mouse).